Consider the following 432-residue polypeptide: Trigger factor (432 aa).

A PPIase FKBP-type domain is found at 161 to 246 (EDRVTIDFTG…LKKVEERELP (86 aa)).

The protein belongs to the FKBP-type PPIase family. Tig subfamily. Homodimer and monomer. In vivo most of the ribosomes are in complex with monomeric TF. Uncomplexed TF, however, is in a monomer-dimer equilibrium with approximately two thirds of TF existing in a dimeric state.

It is found in the cytoplasm. The catalysed reaction is [protein]-peptidylproline (omega=180) = [protein]-peptidylproline (omega=0). Involved in protein export. Acts as a chaperone by maintaining the newly synthesized protein in an open conformation. Functions as a peptidyl-prolyl cis-trans isomerase. The chain is Trigger factor from Shigella boydii serotype 4 (strain Sb227).